The chain runs to 482 residues: Bifunctional protein GlmU (482 aa).

The pyrophosphorylase stretch occupies residues Met1–Arg238. Residues Leu12 to Gly15, Lys26, Gln79, and Gly84 to Thr85 each bind UDP-N-acetyl-alpha-D-glucosamine. Mg(2+) is bound at residue Asp110. 4 residues coordinate UDP-N-acetyl-alpha-D-glucosamine: Gly147, Glu163, Asn178, and Asn236. Asn236 is a Mg(2+) binding site. The interval Val239–Ala259 is linker. The interval Gly260–Asp482 is N-acetyltransferase. Positions 341 and 359 each coordinate UDP-N-acetyl-alpha-D-glucosamine. Catalysis depends on His371, which acts as the Proton acceptor. The UDP-N-acetyl-alpha-D-glucosamine site is built by Tyr374 and Asn385. Residues Ala388, Asn394–Tyr395, Ser413, Ala431, and Arg448 contribute to the acetyl-CoA site. Residues Arg460 to Asp482 form a disordered region. Residues Gly464–Ala473 show a composition bias toward low complexity.

It in the N-terminal section; belongs to the N-acetylglucosamine-1-phosphate uridyltransferase family. In the C-terminal section; belongs to the transferase hexapeptide repeat family. In terms of assembly, homotrimer. The cofactor is Mg(2+).

The protein resides in the cytoplasm. The catalysed reaction is alpha-D-glucosamine 1-phosphate + acetyl-CoA = N-acetyl-alpha-D-glucosamine 1-phosphate + CoA + H(+). The enzyme catalyses N-acetyl-alpha-D-glucosamine 1-phosphate + UTP + H(+) = UDP-N-acetyl-alpha-D-glucosamine + diphosphate. The protein operates within nucleotide-sugar biosynthesis; UDP-N-acetyl-alpha-D-glucosamine biosynthesis; N-acetyl-alpha-D-glucosamine 1-phosphate from alpha-D-glucosamine 6-phosphate (route II): step 2/2. It participates in nucleotide-sugar biosynthesis; UDP-N-acetyl-alpha-D-glucosamine biosynthesis; UDP-N-acetyl-alpha-D-glucosamine from N-acetyl-alpha-D-glucosamine 1-phosphate: step 1/1. It functions in the pathway bacterial outer membrane biogenesis; LPS lipid A biosynthesis. Functionally, catalyzes the last two sequential reactions in the de novo biosynthetic pathway for UDP-N-acetylglucosamine (UDP-GlcNAc). The C-terminal domain catalyzes the transfer of acetyl group from acetyl coenzyme A to glucosamine-1-phosphate (GlcN-1-P) to produce N-acetylglucosamine-1-phosphate (GlcNAc-1-P), which is converted into UDP-GlcNAc by the transfer of uridine 5-monophosphate (from uridine 5-triphosphate), a reaction catalyzed by the N-terminal domain. This Streptomyces coelicolor (strain ATCC BAA-471 / A3(2) / M145) protein is Bifunctional protein GlmU.